A 303-amino-acid chain; its full sequence is GTPase Era (303 aa).

The 168-residue stretch at 7–174 folds into the Era-type G domain; it reads KSGFVAILGR…IDTLSEKLDE (168 aa). Residues 15 to 22 are G1; it reads GRPNVGKS. 15-22 provides a ligand contact to GTP; the sequence is GRPNVGKS. A G2 region spans residues 41–45; it reads QTTRN. A G3 region spans residues 62–65; it reads DTPG. GTP-binding positions include 62–66 and 124–127; these read DTPGI and NKID. The tract at residues 124-127 is G4; it reads NKID. A G5 region spans residues 153–155; it reads ISA. The 79-residue stretch at 205-283 folds into the KH type-2 domain; that stretch reads TREEVPHSIA…YLETWVKIKN (79 aa).

The protein belongs to the TRAFAC class TrmE-Era-EngA-EngB-Septin-like GTPase superfamily. Era GTPase family. As to quaternary structure, monomer.

It is found in the cytoplasm. It localises to the cell membrane. In terms of biological role, an essential GTPase that binds both GDP and GTP, with rapid nucleotide exchange. Plays a role in 16S rRNA processing and 30S ribosomal subunit biogenesis and possibly also in cell cycle regulation and energy metabolism. This is GTPase Era from Lactococcus lactis subsp. lactis (strain IL1403) (Streptococcus lactis).